We begin with the raw amino-acid sequence, 308 residues long: tRNA dimethylallyltransferase (308 aa).

Residue 10 to 17 (GPTASGKT) participates in ATP binding. Position 12–17 (12–17 (TASGKT)) interacts with substrate. Interaction with substrate tRNA stretches follow at residues 35 to 38 (DSSL) and 159 to 163 (QRIFR).

Belongs to the IPP transferase family. As to quaternary structure, monomer. It depends on Mg(2+) as a cofactor.

It carries out the reaction adenosine(37) in tRNA + dimethylallyl diphosphate = N(6)-dimethylallyladenosine(37) in tRNA + diphosphate. Functionally, catalyzes the transfer of a dimethylallyl group onto the adenine at position 37 in tRNAs that read codons beginning with uridine, leading to the formation of N6-(dimethylallyl)adenosine (i(6)A). The sequence is that of tRNA dimethylallyltransferase from Francisella tularensis subsp. novicida (strain U112).